A 248-amino-acid chain; its full sequence is ATP synthase subunit a, chloroplastic (248 aa).

Transmembrane regions (helical) follow at residues 35–55 (GQVFIVSWLVMIVLISLAIAG), 94–114 (IPYISTIFLFILGSNWAGALI), 133–153 (INTTVALALLTSLAYFYAGLS), 202–222 (VFTLLVPILIPLPVMILGLFA), and 224–244 (SIQALIFSTLSAAYIGEALEG).

This sequence belongs to the ATPase A chain family. In terms of assembly, F-type ATPases have 2 components, CF(1) - the catalytic core - and CF(0) - the membrane proton channel. CF(1) has five subunits: alpha(3), beta(3), gamma(1), delta(1), epsilon(1). CF(0) has four main subunits: a, b, b' and c.

It is found in the plastid. It localises to the chloroplast thylakoid membrane. In terms of biological role, key component of the proton channel; it plays a direct role in the translocation of protons across the membrane. This is ATP synthase subunit a, chloroplastic from Antithamnion sp. (Red alga).